A 298-amino-acid chain; its full sequence is 4-hydroxy-tetrahydrodipicolinate synthase (298 aa).

Pyruvate is bound at residue T51. Catalysis depends on Y139, which acts as the Proton donor/acceptor. K167 functions as the Schiff-base intermediate with substrate in the catalytic mechanism. I209 is a binding site for pyruvate.

Belongs to the DapA family. Homotetramer; dimer of dimers.

It localises to the cytoplasm. The catalysed reaction is L-aspartate 4-semialdehyde + pyruvate = (2S,4S)-4-hydroxy-2,3,4,5-tetrahydrodipicolinate + H2O + H(+). Its pathway is amino-acid biosynthesis; L-lysine biosynthesis via DAP pathway; (S)-tetrahydrodipicolinate from L-aspartate: step 3/4. Catalyzes the condensation of (S)-aspartate-beta-semialdehyde [(S)-ASA] and pyruvate to 4-hydroxy-tetrahydrodipicolinate (HTPA). The sequence is that of 4-hydroxy-tetrahydrodipicolinate synthase from Haemophilus influenzae (strain ATCC 51907 / DSM 11121 / KW20 / Rd).